The chain runs to 305 residues: Tetraspanin-12 (305 aa).

Topologically, residues 1–12 (MAREDSVRCLRC) are cytoplasmic. 2 S-palmitoyl cysteine lipidation sites follow: C9 and C12. Residues 13 to 33 (LLYALNLLFWLMSISVLGVSA) traverse the membrane as a helical segment. The Extracellular segment spans residues 34-59 (WIRDYLNNVLTLTAETRVEEAVILTY). The helical transmembrane segment at 60 to 80 (FPVVHPVMIAVCCFLILVGML) threads the bilayer. Residues 81–89 (GYCGTVKRN) are Cytoplasmic-facing. C83 carries S-palmitoyl cysteine lipidation. A helical membrane pass occupies residues 90–110 (LLLLVWYFGSLLVIFCVELAC). The Extracellular segment spans residues 111 to 224 (GVWTYEQEIT…RGTKQLQVLR (114 aa)). A helical transmembrane segment spans residues 225 to 245 (FLGISIGVTQILAMILTITLL). Residues 246–305 (WALYYDRRDPGADQIMSLKNDTSQQLSCHSVELLKPSLTGIFEHTSMANSFNTHFEMEEL) are Cytoplasmic-facing.

This sequence belongs to the tetraspanin (TM4SF) family. In terms of assembly, component of a complex, at least composed of TSPAN12, FZD4 and norrin (NDP). Post-translationally, palmitoylated; required for interaction with ADAM10. The precise position of palmitoylated residues is unclear and occurs either on Cys-9, Cys-12 and/or Cys-83.

Its subcellular location is the cell membrane. Its function is as follows. Regulator of cell surface receptor signal transduction. Plays a central role in retinal vascularization by regulating norrin (NDP) signal transduction. Acts in concert with norrin (NDP) to promote FZD4 multimerization and subsequent activation of FZD4, leading to promote accumulation of beta-catenin (CTNNB1) and stimulate LEF/TCF-mediated transcriptional programs. Suprisingly, it only activates the norrin (NDP)-dependent activation of FZD4, while it does not activate the Wnt-dependent activation of FZD4, suggesting the existence of a Wnt-independent signaling that also promote accumulation the beta-catenin (CTNNB1). This Gallus gallus (Chicken) protein is Tetraspanin-12 (TSPAN12).